The chain runs to 3712 residues: Laminin subunit alpha (3712 aa).

The signal sequence occupies residues 1–22; sequence MGHGVASIGALLVILAISYCQA. The region spanning 23-272 is the Laminin N-terminal domain; the sequence is ELTPPYFNLA…SIKDISIGGR (250 aa). N-linked (GlcNAc...) asparagine glycans are attached at residues Asn116 and Asn219. 43 disulfides stabilise this stretch: Cys273–Cys282, Cys275–Cys296, Cys298–Cys307, Cys310–Cys330, Cys333–Cys342, Cys335–Cys367, Cys370–Cys379, Cys382–Cys400, Cys403–Cys414, Cys405–Cys421, Cys423–Cys432, Cys435–Cys445, Cys448–Cys460, Cys450–Cys468, Cys470–Cys479, Cys482–Cys492, Cys495–Cys507, Cys497–Cys514, Cys516–Cys525, Cys528–Cys538, Cys541–Cys553, Cys543–Cys560, Cys562–Cys571, Cys574–Cys584, Cys587–Cys599, Cys589–Cys605, Cys607–Cys616, Cys619–Cys629, Cys632–Cys644, Cys634–Cys650, Cys652–Cys661, Cys664–Cys674, Cys677–Cys691, Cys679–Cys700, Cys702–Cys711, Cys714–Cys729, Cys732–Cys746, Cys734–Cys753, Cys755–Cys764, Cys767–Cys782, Cys785–Cys797, Cys787–Cys804, and Cys806–Cys815. Laminin EGF-like domains follow at residues 273–332, 333–402, 403–447, 448–494, 495–540, 541–586, 587–631, 632–676, 677–731, and 732–784; these read CMCN…NCEP, CNCH…VCSP, CQCD…NCRE, CECN…ECKA, CECN…TCSY, CDCD…DCKP, CNCS…DCLP, CHCD…SCED, CNCD…GCEI, and CDCW…GCKD. N-linked (GlcNAc...) asparagine glycosylation occurs at Asn395. An N-linked (GlcNAc...) asparagine glycan is attached at Asn453. An N-linked (GlcNAc...) asparagine glycan is attached at Asn508. An N-linked (GlcNAc...) asparagine glycan is attached at Asn588. Asn722 carries an N-linked (GlcNAc...) asparagine glycan. Residues 785 to 815 enclose the Laminin EGF-like 11; truncated domain; sequence CSCDVGGSWQSVCDKISGQCKCHPRITGLAC. A domain IV'' region spans residues 816 to 1374; that stretch reads TQPLTTHFFP…TADYNSGALP (559 aa). Asn897 and Asn1352 each carry an N-linked (GlcNAc...) asparagine glycan. 16 disulfides stabilise this stretch: Cys1375–Cys1387, Cys1377–Cys1394, Cys1396–Cys1405, Cys1408–Cys1418, Cys1421–Cys1429, Cys1423–Cys1436, Cys1438–Cys1447, Cys1450–Cys1463, Cys1466–Cys1480, Cys1468–Cys1487, Cys1489–Cys1498, Cys1501–Cys1511, Cys1514–Cys1526, Cys1516–Cys1533, Cys1535–Cys1544, and Cys1547–Cys1562. 4 Laminin EGF-like domains span residues 1375-1420, 1421-1465, 1466-1513, and 1514-1564; these read CNCD…DCKP, CKCP…GCEE, CACN…HCEQ, and CSCH…GCTT. Asn1484 carries N-linked (GlcNAc...) asparagine glycosylation. In terms of domain architecture, Laminin EGF-like 16; first part spans 1565–1574; the sequence is CFCFGKTSRC. Asn1583 and Asn1617 each carry an N-linked (GlcNAc...) asparagine glycan. Residues 1585-1775 form the Laminin IV type A domain; it reads SLLKHVSITT…GEYQFLAVER (191 aa). The 33-residue stretch at 1776–1808 folds into the Laminin EGF-like 16; second part domain; sequence CSCPPGYSGHSCEDCAPGYYRDPSGPYGGYCIP. Cystine bridges form between Cys1778-Cys1787, Cys1790-Cys1806, Cys1809-Cys1818, Cys1811-Cys1825, Cys1828-Cys1837, Cys1840-Cys1856, Cys1859-Cys1874, Cys1861-Cys1885, Cys1887-Cys1896, Cys1899-Cys1914, Cys1917-Cys1931, Cys1919-Cys1938, Cys1941-Cys1950, Cys1953-Cys1967, Cys1970-Cys1980, Cys1972-Cys1987, Cys1989-Cys1998, Cys2001-Cys2014, Cys2017-Cys2028, Cys2019-Cys2035, Cys2037-Cys2046, Cys2049-Cys2061, Cys2064-Cys2076, Cys2066-Cys2083, Cys2085-Cys2094, and Cys2097-Cys2109. Laminin EGF-like domains follow at residues 1809–1858, 1859–1916, 1917–1969, 1970–2016, 2017–2063, and 2064–2111; these read CECN…DCMI, CACP…VCKP, CECS…NCQS, CDCD…GCRA, CDCG…GCTP, and CNCN…GCQE. The N-linked (GlcNAc...) asparagine glycan is linked to Asn1847. An N-linked (GlcNAc...) asparagine glycan is attached at Asn1943. N-linked (GlcNAc...) asparagine glycosylation is present at Asn2024. The domain II and I stretch occupies residues 2112 to 2671; that stretch reads CNNCHHALLD…EAARQLANSI (560 aa). Positions 2178-2249 form a coiled coil; sequence KKANSELESD…LSKNLEAAAS (72 aa). Asn2196, Asn2215, Asn2267, Asn2301, and Asn2323 each carry an N-linked (GlcNAc...) asparagine glycan. Residues 2301-2321 are a coiled coil; that stretch reads NKSLNALKNDIGEFSDHLEDL. A coiled-coil region spans residues 2376–2450; sequence DLTLNQINQK…QYTDMTASAE (75 aa). N-linked (GlcNAc...) asparagine glycans are attached at residues Asn2482, Asn2524, Asn2538, Asn2569, Asn2699, Asn2720, Asn2890, Asn2938, and Asn3010. Residues 2541–2676 adopt a coiled-coil conformation; sequence EHQLKDINKL…LANSIKVGVN (136 aa). Laminin G-like domains are found at residues 2672–2868, 2876–3048, and 3055–3223; these read KVGV…ERDV, VTGL…EEGC, and VVSY…INGC. Residues Cys3022 and Cys3048 are joined by a disulfide bond. An N-linked (GlcNAc...) asparagine glycan is attached at Asn3070. The cysteines at positions 3196 and 3223 are disulfide-linked. Positions 3244-3297 are disordered; the sequence is NEVESPWSNADTLPPLKPDIESTLPPTTPTTTTTTTTTTTSTTTTSTTTTTTTP. Residues 3265–3297 are compositionally biased toward low complexity; sequence STLPPTTPTTTTTTTTTTTSTTTTSTTTTTTTP. 2 Laminin G-like domains span residues 3349-3528 and 3534-3709; these read GYRF…VVPC and RGLF…QGYC. Residue Asn3491 is glycosylated (N-linked (GlcNAc...) asparagine). Cys3505 and Cys3528 are oxidised to a cystine. A glycan (N-linked (GlcNAc...) asparagine) is linked at Asn3612. A disulfide bond links Cys3682 and Cys3709.

Laminin is a complex glycoprotein, consisting of three different polypeptide chains (alpha, beta, gamma), which are bound to each other by disulfide bonds into a cross-shaped molecule comprising one long and three short arms with globules at each end. Newly formed mesoderm and later prominently expressed in hemocytes, which also synthesize collagen IV. Expressed in muscles.

The protein resides in the secreted. Its subcellular location is the extracellular space. It localises to the extracellular matrix. It is found in the basement membrane. The protein localises to the synapse. The protein resides in the cell projection. Its subcellular location is the axon. It localises to the cytoplasmic vesicle. It is found in the secretory vesicle. The protein localises to the synaptic vesicle. Binding to cells via a high affinity receptor, laminin is thought to mediate the attachment, migration and organization of cells into tissues during embryonic development by interacting with other extracellular matrix components. Activates presynaptic signaling involving integrin alpha-PS3/beta-nu and Fak to suppress neuromuscular junction (NMJ) growth during larval development and during low crawling activity, but not during higher-crawling conditions. Mediates, together with integrin alpha-PS3/beta-nu, glutamate receptor-modulated NMJ growth. The protein is Laminin subunit alpha (LanA) of Drosophila melanogaster (Fruit fly).